Reading from the N-terminus, the 160-residue chain is Cytochrome b6-f complex subunit 4 (160 aa).

Transmembrane regions (helical) follow at residues 36 to 56, 95 to 115, and 131 to 151; these read LLYV…GLAI, LLGI…PFIE, and AIFL…TFPI.

Belongs to the cytochrome b family. PetD subfamily. The 4 large subunits of the cytochrome b6-f complex are cytochrome b6, subunit IV (17 kDa polypeptide, PetD), cytochrome f and the Rieske protein, while the 4 small subunits are PetG, PetL, PetM and PetN. The complex functions as a dimer.

The protein localises to the cellular thylakoid membrane. Its function is as follows. Component of the cytochrome b6-f complex, which mediates electron transfer between photosystem II (PSII) and photosystem I (PSI), cyclic electron flow around PSI, and state transitions. The polypeptide is Cytochrome b6-f complex subunit 4 (Microcystis aeruginosa (strain NIES-843 / IAM M-2473)).